Reading from the N-terminus, the 121-residue chain is Large ribosomal subunit protein bL21 (121 aa).

This sequence belongs to the bacterial ribosomal protein bL21 family. As to quaternary structure, part of the 50S ribosomal subunit. Contacts protein L20.

Its function is as follows. This protein binds to 23S rRNA in the presence of protein L20. This chain is Large ribosomal subunit protein bL21, found in Synechococcus sp. (strain CC9605).